The sequence spans 303 residues: Proteasome subunit beta (303 aa).

Residues Met-1 to Gly-67 constitute a propeptide, removed in mature form; by autocatalysis. The active-site Nucleophile is the Thr-68.

It belongs to the peptidase T1B family. As to quaternary structure, the 20S proteasome core is composed of 14 alpha and 14 beta subunits that assemble into four stacked heptameric rings, resulting in a barrel-shaped structure. The two inner rings, each composed of seven catalytic beta subunits, are sandwiched by two outer rings, each composed of seven alpha subunits. The catalytic chamber with the active sites is on the inside of the barrel. Has a gated structure, the ends of the cylinder being occluded by the N-termini of the alpha-subunits. Is capped by the proteasome-associated ATPase, ARC.

The protein resides in the cytoplasm. It carries out the reaction Cleavage of peptide bonds with very broad specificity.. It functions in the pathway protein degradation; proteasomal Pup-dependent pathway. Its activity is regulated as follows. The formation of the proteasomal ATPase ARC-20S proteasome complex, likely via the docking of the C-termini of ARC into the intersubunit pockets in the alpha-rings, may trigger opening of the gate for substrate entry. Interconversion between the open-gate and close-gate conformations leads to a dynamic regulation of the 20S proteasome proteolysis activity. Functionally, component of the proteasome core, a large protease complex with broad specificity involved in protein degradation. This Mycobacterium avium (strain 104) protein is Proteasome subunit beta.